Here is a 268-residue protein sequence, read N- to C-terminus: Putative pyruvate, phosphate dikinase regulatory protein (268 aa).

147–154 (GLSRTSKT) contributes to the ADP binding site.

This sequence belongs to the pyruvate, phosphate/water dikinase regulatory protein family. PDRP subfamily.

The catalysed reaction is N(tele)-phospho-L-histidyl/L-threonyl-[pyruvate, phosphate dikinase] + ADP = N(tele)-phospho-L-histidyl/O-phospho-L-threonyl-[pyruvate, phosphate dikinase] + AMP + H(+). The enzyme catalyses N(tele)-phospho-L-histidyl/O-phospho-L-threonyl-[pyruvate, phosphate dikinase] + phosphate + H(+) = N(tele)-phospho-L-histidyl/L-threonyl-[pyruvate, phosphate dikinase] + diphosphate. Functionally, bifunctional serine/threonine kinase and phosphorylase involved in the regulation of the pyruvate, phosphate dikinase (PPDK) by catalyzing its phosphorylation/dephosphorylation. This is Putative pyruvate, phosphate dikinase regulatory protein from Clostridium beijerinckii (strain ATCC 51743 / NCIMB 8052) (Clostridium acetobutylicum).